The sequence spans 163 residues: Probable cobalt-precorrin-6B C(15)-methyltransferase (decarboxylating) (163 aa).

Residues threonine 6, 30 to 34 (GCGSG), aspartate 51, and glycine 75 contribute to the S-adenosyl-L-methionine site.

It belongs to the methyltransferase superfamily. Archaeal-type CbiT family.

It carries out the reaction Co-precorrin-6B + S-adenosyl-L-methionine = Co-precorrin-7 + S-adenosyl-L-homocysteine + CO2. Its pathway is cofactor biosynthesis; adenosylcobalamin biosynthesis; cob(II)yrinate a,c-diamide from sirohydrochlorin (anaerobic route): step 8/10. Its function is as follows. Catalyzes the methylation of C-15 in cobalt-precorrin-6B followed by the decarboxylation of C-12 to form cobalt-precorrin-7. The sequence is that of Probable cobalt-precorrin-6B C(15)-methyltransferase (decarboxylating) from Archaeoglobus fulgidus (strain ATCC 49558 / DSM 4304 / JCM 9628 / NBRC 100126 / VC-16).